We begin with the raw amino-acid sequence, 192 residues long: Imidazoleglycerol-phosphate dehydratase (192 aa).

The protein belongs to the imidazoleglycerol-phosphate dehydratase family.

It is found in the cytoplasm. It carries out the reaction D-erythro-1-(imidazol-4-yl)glycerol 3-phosphate = 3-(imidazol-4-yl)-2-oxopropyl phosphate + H2O. Its pathway is amino-acid biosynthesis; L-histidine biosynthesis; L-histidine from 5-phospho-alpha-D-ribose 1-diphosphate: step 6/9. This Vesicomyosocius okutanii subsp. Calyptogena okutanii (strain HA) protein is Imidazoleglycerol-phosphate dehydratase.